We begin with the raw amino-acid sequence, 65 residues long: Toxin NaTx-22 (65 aa).

The region spanning 1-64 (KDGYPVIKTT…TYPIPGKTCK (64 aa)) is the LCN-type CS-alpha/beta domain. Cystine bridges form between Cys12–Cys63, Cys16–Cys39, Cys25–Cys44, and Cys29–Cys46.

It belongs to the long (4 C-C) scorpion toxin superfamily. Sodium channel inhibitor family. Expressed by the venom gland.

Its subcellular location is the secreted. Its function is as follows. Probable sodium channel inhibitor. The chain is Toxin NaTx-22 from Centruroides sculpturatus (Arizona bark scorpion).